The sequence spans 305 residues: tRNA dimethylallyltransferase (305 aa).

Position 14 to 21 (14 to 21 (GPTASGKS)) interacts with ATP. 16–21 (TASGKS) contacts substrate. Residues 39–42 (DSMQ) are interaction with substrate tRNA.

The protein belongs to the IPP transferase family. Monomer. The cofactor is Mg(2+).

It catalyses the reaction adenosine(37) in tRNA + dimethylallyl diphosphate = N(6)-dimethylallyladenosine(37) in tRNA + diphosphate. In terms of biological role, catalyzes the transfer of a dimethylallyl group onto the adenine at position 37 in tRNAs that read codons beginning with uridine, leading to the formation of N6-(dimethylallyl)adenosine (i(6)A). In Bradyrhizobium sp. (strain BTAi1 / ATCC BAA-1182), this protein is tRNA dimethylallyltransferase.